A 263-amino-acid polypeptide reads, in one-letter code: Tryptophan synthase alpha chain (263 aa).

Catalysis depends on proton acceptor residues E49 and D60.

The protein belongs to the TrpA family. Tetramer of two alpha and two beta chains.

The catalysed reaction is (1S,2R)-1-C-(indol-3-yl)glycerol 3-phosphate + L-serine = D-glyceraldehyde 3-phosphate + L-tryptophan + H2O. Its pathway is amino-acid biosynthesis; L-tryptophan biosynthesis; L-tryptophan from chorismate: step 5/5. The alpha subunit is responsible for the aldol cleavage of indoleglycerol phosphate to indole and glyceraldehyde 3-phosphate. The protein is Tryptophan synthase alpha chain of Jannaschia sp. (strain CCS1).